The chain runs to 277 residues: Hemin import ATP-binding protein HmuV (277 aa).

Residues 19–259 (VEVADLNYSV…AIIEEAFGHR (241 aa)) enclose the ABC transporter domain. Residue 51–58 (GRNGAGKS) participates in ATP binding.

It belongs to the ABC transporter superfamily. Heme (hemin) importer (TC 3.A.1.14.5) family. In terms of assembly, the complex is composed of two ATP-binding proteins (HmuV), two transmembrane proteins (HmuU) and a solute-binding protein (HmuT).

The protein localises to the cell membrane. Its function is as follows. Part of the ABC transporter complex HmuTUV involved in hemin import. Responsible for energy coupling to the transport system. The sequence is that of Hemin import ATP-binding protein HmuV from Deinococcus geothermalis (strain DSM 11300 / CIP 105573 / AG-3a).